A 718-amino-acid chain; its full sequence is Zinc finger protein 39 (718 aa).

A KRAB domain is found at 59–130 (VSFEDVSVDF…EDVPKQSRAD (72 aa)). The C2H2-type 1 zinc-finger motif lies at 298–320 (FECSICKKTFCTKCELMKHKKIH). The C2H2-type 2; degenerate zinc finger occupies 353–375 (HRCKQCEKCFHQKNQQNVHERVP). 11 C2H2-type zinc fingers span residues 409 to 431 (YGCN…QKIH), 437 to 459 (YGCE…QRTH), 465 to 487 (YECK…HRTH), 493 to 515 (YECD…QKVH), 521 to 543 (YECE…QKTH), 549 to 571 (YECN…QGTH), 577 to 599 (YQCE…QRNH), 605 to 627 (YACE…QRSH), 633 to 655 (YSCE…QRTH), 661 to 683 (YECK…QVTH), and 689 to 711 (FECQ…QRIH).

Predominantly in the spermatocytes and spermatids of testes.

The protein resides in the nucleus. Its function is as follows. A putative DNA-binding regulatory protein associated with meiosis in spermatogenesis. In Mus musculus (Mouse), this protein is Zinc finger protein 39 (Zfp39).